Reading from the N-terminus, the 314-residue chain is Methionyl-tRNA formyltransferase (314 aa).

110 to 113 (SLLP) is a binding site for (6S)-5,6,7,8-tetrahydrofolate.

This sequence belongs to the Fmt family.

The enzyme catalyses L-methionyl-tRNA(fMet) + (6R)-10-formyltetrahydrofolate = N-formyl-L-methionyl-tRNA(fMet) + (6S)-5,6,7,8-tetrahydrofolate + H(+). Functionally, attaches a formyl group to the free amino group of methionyl-tRNA(fMet). The formyl group appears to play a dual role in the initiator identity of N-formylmethionyl-tRNA by promoting its recognition by IF2 and preventing the misappropriation of this tRNA by the elongation apparatus. The sequence is that of Methionyl-tRNA formyltransferase from Lactobacillus acidophilus (strain ATCC 700396 / NCK56 / N2 / NCFM).